The following is a 262-amino-acid chain: Glucosamine-6-phosphate deaminase (262 aa).

The Proton acceptor; for enolization step role is filled by D63. Residue N129 is the For ring-opening step of the active site. H131 (proton acceptor; for ring-opening step) is an active-site residue. E136 serves as the catalytic For ring-opening step.

It belongs to the glucosamine/galactosamine-6-phosphate isomerase family. NagB subfamily.

It carries out the reaction alpha-D-glucosamine 6-phosphate + H2O = beta-D-fructose 6-phosphate + NH4(+). The protein operates within amino-sugar metabolism; N-acetylneuraminate degradation; D-fructose 6-phosphate from N-acetylneuraminate: step 5/5. Its function is as follows. Catalyzes the reversible isomerization-deamination of glucosamine 6-phosphate (GlcN6P) to form fructose 6-phosphate (Fru6P) and ammonium ion. The chain is Glucosamine-6-phosphate deaminase from Bacillus cytotoxicus (strain DSM 22905 / CIP 110041 / 391-98 / NVH 391-98).